The following is a 464-amino-acid chain: ATP-dependent protease ATPase subunit HslU (464 aa).

Residues Ile-19, 61-66 (GVGKTE), Asp-277, Glu-342, and Arg-414 each bind ATP.

The protein belongs to the ClpX chaperone family. HslU subfamily. As to quaternary structure, a double ring-shaped homohexamer of HslV is capped on each side by a ring-shaped HslU homohexamer. The assembly of the HslU/HslV complex is dependent on binding of ATP.

Its subcellular location is the cytoplasm. Its function is as follows. ATPase subunit of a proteasome-like degradation complex; this subunit has chaperone activity. The binding of ATP and its subsequent hydrolysis by HslU are essential for unfolding of protein substrates subsequently hydrolyzed by HslV. HslU recognizes the N-terminal part of its protein substrates and unfolds these before they are guided to HslV for hydrolysis. The sequence is that of ATP-dependent protease ATPase subunit HslU from Lactobacillus gasseri (strain ATCC 33323 / DSM 20243 / BCRC 14619 / CIP 102991 / JCM 1131 / KCTC 3163 / NCIMB 11718 / NCTC 13722 / AM63).